An 80-amino-acid polypeptide reads, in one-letter code: MMKPLRQQNRPVISYVPRVEPAPPEHAIKMDAFRDVWILRGKYVAFILMGEAFQRSPAFTVPESAQRWANQVRQENEIAE.

Belongs to the CedA family.

Activates the cell division inhibited by chromosomal DNA over-replication. The polypeptide is Cell division activator CedA (Citrobacter koseri (strain ATCC BAA-895 / CDC 4225-83 / SGSC4696)).